The sequence spans 204 residues: Recombination protein RecR (204 aa).

The segment at 57-72 (CPTCFNYTDTDICRYC) adopts a C4-type zinc-finger fold. Positions 80–181 (ESICVVEEPS…KLSRIAHGVP (102 aa)) constitute a Toprim domain.

Belongs to the RecR family.

May play a role in DNA repair. It seems to be involved in an RecBC-independent recombinational process of DNA repair. It may act with RecF and RecO. The chain is Recombination protein RecR from Bdellovibrio bacteriovorus (strain ATCC 15356 / DSM 50701 / NCIMB 9529 / HD100).